The following is a 194-amino-acid chain: MSITNATISQRAKKWLEDDRIFIDTETTGLGDDAEIVEICLIDSAGFIMLNTLVKPTKPIPAEATAIHGITDEMVMYAPTWKDIHGAVASLFFEYGFVIYNADYDTRLIYQTAKLYGLENDGFCYFLNERSACAMMLYAEYRGEPGRFKGYKWHKLVDAAAHEGVSVEGKAHRALADCRMTLGIIDALAKGGAA.

The region spanning 20 to 185 (RIFIDTETTG…ADCRMTLGII (166 aa)) is the Exonuclease domain.

This is an uncharacterized protein from Escherichia coli (Bacteriophage 186).